A 379-amino-acid polypeptide reads, in one-letter code: Dual-specificity RNA methyltransferase RlmN (379 aa).

Glu-96 functions as the Proton acceptor in the catalytic mechanism. Positions 102–342 (TDDRGTLCVS…TRTTRGDDID (241 aa)) constitute a Radical SAM core domain. A disulfide bond links Cys-109 and Cys-345. [4Fe-4S] cluster contacts are provided by Cys-116, Cys-120, and Cys-123. Residues 170–171 (GE), Ser-202, 224–226 (SLH), and Asn-302 contribute to the S-adenosyl-L-methionine site. Cys-345 functions as the S-methylcysteine intermediate in the catalytic mechanism.

Belongs to the radical SAM superfamily. RlmN family. The cofactor is [4Fe-4S] cluster.

The protein resides in the cytoplasm. It carries out the reaction adenosine(2503) in 23S rRNA + 2 reduced [2Fe-2S]-[ferredoxin] + 2 S-adenosyl-L-methionine = 2-methyladenosine(2503) in 23S rRNA + 5'-deoxyadenosine + L-methionine + 2 oxidized [2Fe-2S]-[ferredoxin] + S-adenosyl-L-homocysteine. The enzyme catalyses adenosine(37) in tRNA + 2 reduced [2Fe-2S]-[ferredoxin] + 2 S-adenosyl-L-methionine = 2-methyladenosine(37) in tRNA + 5'-deoxyadenosine + L-methionine + 2 oxidized [2Fe-2S]-[ferredoxin] + S-adenosyl-L-homocysteine. Its function is as follows. Specifically methylates position 2 of adenine 2503 in 23S rRNA and position 2 of adenine 37 in tRNAs. m2A2503 modification seems to play a crucial role in the proofreading step occurring at the peptidyl transferase center and thus would serve to optimize ribosomal fidelity. The sequence is that of Dual-specificity RNA methyltransferase RlmN from Pseudomonas entomophila (strain L48).